We begin with the raw amino-acid sequence, 430 residues long: Cysteate synthase (430 aa).

Lys-106 is subject to N6-(pyridoxal phosphate)lysine. The pyridoxal 5'-phosphate site is built by Asn-132 and Thr-381.

The protein belongs to the threonine synthase family. Cysteate synthase subfamily. As to quaternary structure, homotrimer. Requires pyridoxal 5'-phosphate as cofactor.

It carries out the reaction O-phospho-L-serine + sulfite + H(+) = L-cysteate + phosphate. The protein operates within cofactor biosynthesis; coenzyme M biosynthesis. Functionally, specifically catalyzes the beta-elimination of phosphate from L-phosphoserine and the beta-addition of sulfite to the dehydroalanine intermediate to produce L-cysteate. The polypeptide is Cysteate synthase (Methanoculleus marisnigri (strain ATCC 35101 / DSM 1498 / JR1)).